Here is a 144-residue protein sequence, read N- to C-terminus: Large ribosomal subunit protein uL11 (144 aa).

This sequence belongs to the universal ribosomal protein uL11 family. As to quaternary structure, part of the ribosomal stalk of the 50S ribosomal subunit. Interacts with L10 and the large rRNA to form the base of the stalk. L10 forms an elongated spine to which L12 dimers bind in a sequential fashion forming a multimeric L10(L12)X complex. One or more lysine residues are methylated.

Functionally, forms part of the ribosomal stalk which helps the ribosome interact with GTP-bound translation factors. In Neisseria gonorrhoeae (strain ATCC 700825 / FA 1090), this protein is Large ribosomal subunit protein uL11.